The following is a 356-amino-acid chain: MAGATLFDMNDKRSADKQKALDSALAQIERQFGKGSIMKLGADNPVAEIEATSTGSLGLDIALGIGGLPKGRIIEIFGPESSGKTTLTLHVVAEEQKKGGVCAFVDAEHALDPQYAKKLGVNLDELLISQPDTGEQALEIVDTLVASGAVSLVVVDSVAALTPKSEIEGDMGDMQMGSQARLMSQAMRKLTASIGRSNCMVIFINQIRMKIGVMFGSPETTTGGNALKFYASVRLDIRRAGSIKDRDEVTGNATRVKVVKNKVAPPFRQVEFDIMYGEGISKVGELIDLGIKAGVVEKSGSWYSYGDERIGQGRENAKQFLRDHPDMAHAIEDKIRASHGLDFGVADDGDEVMAED.

78–85 (GPESSGKT) contacts ATP.

This sequence belongs to the RecA family.

It is found in the cytoplasm. Its function is as follows. Can catalyze the hydrolysis of ATP in the presence of single-stranded DNA, the ATP-dependent uptake of single-stranded DNA by duplex DNA, and the ATP-dependent hybridization of homologous single-stranded DNAs. It interacts with LexA causing its activation and leading to its autocatalytic cleavage. This chain is Protein RecA, found in Paracoccus denitrificans.